Reading from the N-terminus, the 309-residue chain is Assembly-complementing factor 4 (309 aa).

3 disordered regions span residues 1-80 (MSED…ASPI), 164-240 (KSIN…ENTP), and 286-309 (VRSE…LFKR). Composition is skewed to basic and acidic residues over residues 13 to 24 (ELHKLSIVDKHS) and 34 to 44 (KQHEVQPESKS). Ser44, Ser71, Ser74, Ser78, and Ser165 each carry phosphoserine. Positions 61-80 (SSPQRSTTNQSPVSDHASPI) are enriched in polar residues. Low complexity-rich tracts occupy residues 174 to 188 (NNNV…LPNR), 205 to 214 (PSRSSESTPT), and 222 to 239 (PRNT…GENT). Residues 287-298 (RSEDEDDEEFEP) are compositionally biased toward acidic residues. A Phosphoserine modification is found at Ser288.

May be involved in actin cytoskeleton organization and biogenesis. The sequence is that of Assembly-complementing factor 4 (ACF4) from Saccharomyces cerevisiae (strain ATCC 204508 / S288c) (Baker's yeast).